Consider the following 399-residue polypeptide: Enoyl-[acyl-carrier-protein] reductase [NADH] (399 aa).

Residues 49-54 (GASSGY), 75-76 (FE), 112-113 (DA), and 141-142 (LA) contribute to the NAD(+) site. Tyrosine 227 contributes to the substrate binding site. The active-site Proton donor is the tyrosine 237. NAD(+) is bound by residues lysine 246 and 272–274 (VVT).

This sequence belongs to the TER reductase family. In terms of assembly, monomer.

It carries out the reaction a 2,3-saturated acyl-[ACP] + NAD(+) = a (2E)-enoyl-[ACP] + NADH + H(+). It functions in the pathway lipid metabolism; fatty acid biosynthesis. Its function is as follows. Involved in the final reduction of the elongation cycle of fatty acid synthesis (FAS II). Catalyzes the reduction of a carbon-carbon double bond in an enoyl moiety that is covalently linked to an acyl carrier protein (ACP). This chain is Enoyl-[acyl-carrier-protein] reductase [NADH], found in Pseudomonas putida (strain W619).